We begin with the raw amino-acid sequence, 1043 residues long: F-box DNA helicase 1 (1043 aa).

The segment at 30-56 (QRWTNRDPNHGLYPKPRTKRGSRGQGS) is disordered. The PIP-box signature appears at 57 to 64 (QRCIPEFF). Residues 101 to 191 (CALPQEGSAG…QDAGDVGPDP (91 aa)) form a disordered region. Phosphoserine is present on serine 124. The region spanning 138–184 (SRWDGVSKKAPRHHLSVPCTRPREARQEAEDSTSRLSAESGETDQDA) is the F-box domain. Over residues 158-170 (RPREARQEAEDST) the composition is skewed to basic and acidic residues. The region spanning 442-705 (THEQQLILNH…FYLTQSFRFG (264 aa)) is the UvrD-like helicase ATP-binding domain. Position 463–470 (463–470 (AFAGTGKT)) interacts with ATP. The APIM motif signature appears at 807-811 (KFIRR).

The protein belongs to the helicase family. UvrD subfamily. In terms of assembly, part of the SCF (SKP1-CUL1-F-box) E3 ubiquitin-protein ligase complex SCF(FBH1) composed of CUL1, SKP1, RBX1 and FBH1. Interacts with RAD51. Interacts with RPA2. Interacts (via PIP-box and RanBP2-type zinc finger) with PCNA. Post-translationally, ubiquitinated. Ubiquitination by the DCX(DTL) complex, also named CRL4(CDT2), leading to its degradation: ubiquitination takes place after its localization to DNA damage sites, possibly to facilitate the translesion synthesis (TLS) pathway.

It is found in the nucleus. The protein localises to the chromosome. It catalyses the reaction Couples ATP hydrolysis with the unwinding of duplex DNA by translocating in the 3'-5' direction.. The catalysed reaction is ATP + H2O = ADP + phosphate + H(+). It participates in protein modification; protein ubiquitination. Its function is as follows. 3'-5' DNA helicase and substrate-recognition component of the SCF(FBH1) E3 ubiquitin ligase complex that plays a key role in response to stalled/damaged replication forks. Involved in genome maintenance by acting as an anti-recombinogenic helicase and preventing extensive strand exchange during homologous recombination: promotes RAD51 filament dissolution from stalled forks, thereby inhibiting homologous recombination and preventing excessive recombination. Also promotes cell death and DNA double-strand breakage in response to replication stress: together with MUS81, promotes the endonucleolytic DNA cleavage following prolonged replication stress via its helicase activity, possibly to eliminate cells with excessive replication stress. Plays a major role in remodeling of stalled DNA forks by catalyzing fork regression, in which the fork reverses and the two nascent DNA strands anneal. In addition to the helicase activity, also acts as the substrate-recognition component of the SCF(FBH1) E3 ubiquitin ligase complex, a complex that mediates ubiquitination of RAD51, leading to regulate RAD51 subcellular location. This chain is F-box DNA helicase 1, found in Homo sapiens (Human).